Consider the following 277-residue polypeptide: Urease accessory protein UreD (277 aa).

It belongs to the UreD family. UreD, UreF and UreG form a complex that acts as a GTP-hydrolysis-dependent molecular chaperone, activating the urease apoprotein by helping to assemble the nickel containing metallocenter of UreC. The UreE protein probably delivers the nickel.

It localises to the cytoplasm. Its function is as follows. Required for maturation of urease via the functional incorporation of the urease nickel metallocenter. The polypeptide is Urease accessory protein UreD (Pseudomonas putida (strain GB-1)).